Consider the following 346-residue polypeptide: Biotin synthase (346 aa).

Residues 38–256 (QQVQVSTLLS…IAVARIMMPT (219 aa)) enclose the Radical SAM core domain. 3 residues coordinate [4Fe-4S] cluster: C53, C57, and C60. [2Fe-2S] cluster-binding residues include C97, C128, C188, and R260.

It belongs to the radical SAM superfamily. Biotin synthase family. In terms of assembly, homodimer. The cofactor is [4Fe-4S] cluster. [2Fe-2S] cluster serves as cofactor.

The catalysed reaction is (4R,5S)-dethiobiotin + (sulfur carrier)-SH + 2 reduced [2Fe-2S]-[ferredoxin] + 2 S-adenosyl-L-methionine = (sulfur carrier)-H + biotin + 2 5'-deoxyadenosine + 2 L-methionine + 2 oxidized [2Fe-2S]-[ferredoxin]. It functions in the pathway cofactor biosynthesis; biotin biosynthesis; biotin from 7,8-diaminononanoate: step 2/2. Catalyzes the conversion of dethiobiotin (DTB) to biotin by the insertion of a sulfur atom into dethiobiotin via a radical-based mechanism. The sequence is that of Biotin synthase from Salmonella newport (strain SL254).